Here is a 308-residue protein sequence, read N- to C-terminus: Transcription factor JunB (308 aa).

The basic motif stretch occupies residues 229 to 256; sequence RIKAERKRLRNRLAATKCRKRKLERISR. Positions 229-292 constitute a bZIP domain; that stretch reads RIKAERKRLR…AQLKQKVLRH (64 aa). The interval 257 to 285 is leucine-zipper; it reads LEEKVKVLKNDNAGLSNTASVLRDQVAQL.

It belongs to the bZIP family. Jun subfamily. Binds DNA as a homodimer or as a heterodimer with another member of the jun/fos family.

The protein localises to the nucleus. Transcription factor involved in regulating gene activity following the primary growth factor response. Binds to the DNA sequence 5'-TGA[CG]TCA-3'. This is Transcription factor JunB (junb) from Cyprinus carpio (Common carp).